Consider the following 226-residue polypeptide: MSLLARLEQSVHENGGLIVSCQPVPGSPMDKPEIVAAMAQAAASAGAVAVRIEGIENLRTVRPHLSVPIIGIIKRDLTGSPVRITPYLQDVDALAQAGADIIAFDASFRSRPVDIDSLLTRIRLHGLLAMADCSTVNEGISCHQKGIEFIGTTLSGYTGPITPVEPDLAMVTQLSHAGCRVIAEGRYNTPALAANAIEHGAWAVTVGSAITRIEHICQWFSHAVRR.

Belongs to the NanE family.

It carries out the reaction an N-acyl-D-glucosamine 6-phosphate = an N-acyl-D-mannosamine 6-phosphate. It participates in amino-sugar metabolism; N-acetylneuraminate degradation; D-fructose 6-phosphate from N-acetylneuraminate: step 3/5. Converts N-acetylmannosamine-6-phosphate (ManNAc-6-P) to N-acetylglucosamine-6-phosphate (GlcNAc-6-P). This is Putative N-acetylmannosamine-6-phosphate 2-epimerase 1 from Salmonella paratyphi A (strain ATCC 9150 / SARB42).